The sequence spans 188 residues: Guanylate kinase (188 aa).

In terms of domain architecture, Guanylate kinase-like spans 4-183 (RNIVVLTAPS…AVEETLTRIR (180 aa)). 11–18 (APSGAGKT) is an ATP binding site.

Belongs to the guanylate kinase family.

The protein localises to the cytoplasm. It carries out the reaction GMP + ATP = GDP + ADP. Essential for recycling GMP and indirectly, cGMP. The protein is Guanylate kinase of Salinibacter ruber (strain DSM 13855 / M31).